A 480-amino-acid polypeptide reads, in one-letter code: EGF-like repeat and discoidin I-like domain-containing protein 3 (480 aa).

The N-terminal stretch at Met1 to Gly23 is a signal peptide. The 37-residue stretch at Asp24–Ser60 folds into the EGF-like 1 domain. Cystine bridges form between Cys26-Cys37, Cys31-Cys48, and Cys50-Cys59. O-linked (GalNAc...) threonine glycosylation is present at Thr73. 2 consecutive EGF-like domains span residues Ser74–Gln117 and Asn119–Gln155. Intrachain disulfides connect Cys78–Cys89, Cys83–Cys105, and Cys107–Cys116. Thr88 carries an O-linked (Fuc...) threonine glycan. A Cell attachment site motif is present at residues Arg96–Asp98. Ca(2+) is bound by residues Asn119, Ile120, and Glu122. Disulfide bonds link Cys123–Cys134, Cys128–Cys143, Cys145–Cys154, Cys158–Cys314, Cys301–Cys305, and Cys319–Cys476. Residues Asp136 and Leu137 each coordinate Ca(2+). N-linked (GlcNAc...) asparagine glycosylation occurs at Asn140. 2 F5/8 type C domains span residues Cys158–Cys314 and Cys319–Cys476.

Its subcellular location is the secreted. Its function is as follows. Promotes adhesion of endothelial cells through interaction with the alpha-v/beta-3 integrin receptor. Inhibits formation of vascular-like structures. May be involved in regulation of vascular morphogenesis of remodeling in embryonic development. This chain is EGF-like repeat and discoidin I-like domain-containing protein 3 (EDIL3), found in Homo sapiens (Human).